The sequence spans 485 residues: Regulatory protein ViaA (485 aa).

It belongs to the ViaA family. As to quaternary structure, homodimer. Interacts with RavA.

Its subcellular location is the cytoplasm. Its function is as follows. Component of the RavA-ViaA chaperone complex, which may act on the membrane to optimize the function of some of the respiratory chains. ViaA stimulates the ATPase activity of RavA. This is Regulatory protein ViaA from Photorhabdus laumondii subsp. laumondii (strain DSM 15139 / CIP 105565 / TT01) (Photorhabdus luminescens subsp. laumondii).